The following is a 310-amino-acid chain: Endo-1,4-beta-xylanase B (310 aa).

The first 19 residues, 1-19 (MISLSSVAIALTTVVGALA), serve as a signal peptide directing secretion. The region spanning 33–223 (AITSSQTGTN…SSGSASMTVS (191 aa)) is the GH11 domain. The active-site Nucleophile is the Glu119. Glu210 (proton donor) is an active-site residue. A compositionally biased stretch (low complexity) spans 218–227 (ASMTVSAGSS). The segment at 218 to 274 (ASMTVSAGSSSSGGSGSGSGSGSGSGSGSGSQTTTAGSSTGTGTGSGSGSGSGGSGG) is disordered. Over residues 228 to 246 (SSGGSGSGSGSGSGSGSGS) the composition is skewed to gly residues. A compositionally biased stretch (low complexity) spans 247–256 (GSQTTTAGSS). Positions 257-274 (TGTGTGSGSGSGSGGSGG) are enriched in gly residues. A CBM1 domain is found at 275 to 310 (NCAAQWGQCGGQGWNGPTCCSSGTCKASNQWYSQCL).

This sequence belongs to the glycosyl hydrolase 11 (cellulase G) family.

The protein resides in the secreted. The catalysed reaction is Endohydrolysis of (1-&gt;4)-beta-D-xylosidic linkages in xylans.. The protein operates within glycan degradation; xylan degradation. Endo-1,4-beta-xylanase involved in the hydrolysis of xylan, a major structural heterogeneous polysaccharide found in plant biomass representing the second most abundant polysaccharide in the biosphere, after cellulose. Hydrolyzes birchwood xylan, beechwood xylan, and oat spelt xylan to produce short-chain xylooligosaccharides, xylopentaose, xylotriose, and xylobiose as the main products. The polypeptide is Endo-1,4-beta-xylanase B (xynB) (Penicillium oxalicum).